Here is a 163-residue protein sequence, read N- to C-terminus: Putative pre-16S rRNA nuclease (163 aa).

It belongs to the YqgF nuclease family.

The protein resides in the cytoplasm. Functionally, could be a nuclease involved in processing of the 5'-end of pre-16S rRNA. The protein is Putative pre-16S rRNA nuclease of Nitrobacter hamburgensis (strain DSM 10229 / NCIMB 13809 / X14).